We begin with the raw amino-acid sequence, 421 residues long: C2 calcium-dependent domain-containing protein 4C (421 aa).

4 disordered regions span residues Arg-13–Ala-97, Asp-119–Ser-140, His-158–Gly-228, and Val-250–Val-303. Residues Glu-215–Gly-228 are compositionally biased toward polar residues. Phosphoserine is present on residues Ser-262, Ser-264, and Ser-273. The C2 domain occupies Pro-305–Leu-421.

The protein belongs to the C2CD4 family.

In Homo sapiens (Human), this protein is C2 calcium-dependent domain-containing protein 4C (C2CD4C).